Here is a 455-residue protein sequence, read N- to C-terminus: J protein JJJ2 (455 aa).

The region spanning 12 to 76 (TYYSILGVPT…QLRAEYDKKL (65 aa)) is the J domain. The segment at 104-241 (RNSKPYEQQP…RKKSEKKATP (138 aa)) is disordered. Residues 133–144 (NSNPHNENSSNN) show a composition bias toward low complexity. Basic and acidic residues predominate over residues 156-168 (TLSKDSEDKHGTD).

The protein resides in the cytoplasm. It is found in the nucleus. In Candida glabrata (strain ATCC 2001 / BCRC 20586 / JCM 3761 / NBRC 0622 / NRRL Y-65 / CBS 138) (Yeast), this protein is J protein JJJ2 (JJJ2).